Reading from the N-terminus, the 400-residue chain is CinA-like protein (400 aa).

This sequence belongs to the CinA family.

In Escherichia coli (strain SMS-3-5 / SECEC), this protein is CinA-like protein.